Consider the following 386-residue polypeptide: Probable serine/threonine-protein kinase PBL23 (386 aa).

Residue Cys-5 is the site of S-palmitoyl cysteine attachment. Residues 82-360 enclose the Protein kinase domain; the sequence is FNPDNQLGEG…SDVVTALEYL (279 aa). ATP is bound by residues 88–96 and Lys-111; that span reads LGEGGFGRV. Asp-210 acts as the Proton acceptor in catalysis. Positions 365 to 386 are disordered; sequence TEEDGQTVEGEEEEEEDERSKL. Acidic residues predominate over residues 368–386; sequence DGQTVEGEEEEEEDERSKL.

It belongs to the protein kinase superfamily. Ser/Thr protein kinase family.

It localises to the cell membrane. It carries out the reaction L-seryl-[protein] + ATP = O-phospho-L-seryl-[protein] + ADP + H(+). The catalysed reaction is L-threonyl-[protein] + ATP = O-phospho-L-threonyl-[protein] + ADP + H(+). In terms of biological role, may be involved in plant defense signaling. The sequence is that of Probable serine/threonine-protein kinase PBL23 from Arabidopsis thaliana (Mouse-ear cress).